We begin with the raw amino-acid sequence, 362 residues long: 2-oxoglutarate-dependent dioxygenase lolO1 (362 aa).

Residues 199–312 form the Fe2OG dioxygenase domain; the sequence is TWNYFLGQPV…RYSLVFFGHL (114 aa). 3 residues coordinate Fe cation: His222, Asp224, and His280. Arg303 is a binding site for 2-oxoglutarate.

The protein belongs to the iron/ascorbate-dependent oxidoreductase family. Requires Fe(2+) as cofactor.

The protein operates within alkaloid biosynthesis. Functionally, 2-oxoglutarate-dependent dioxygenase; part of the gene cluster that mediates the biosynthesis of loline alkaloids, potent insecticidal agents composed of a pyrrolizidine ring system and an uncommon ether bridge linking carbons 2 and 7. Lolines are structurally differentiated by the various modifications of the L-amino group and include norloline, loline, N-methylloline, N-acetylloline, N-acetylnorloline, and N-formylloline. The first committed step is the condensation of O-acetyl-L-homoserine (derived from L-aspartic acid) and L-proline, probably catalyzed by the gamma-type pyridoxal 5'-phosphate(PLP)-dependent enzyme lolC, to give the diamino diacid, NACPP. Ensuing cyclization, decarboxylation, and acetylation steps yield 1-exo-acetamidopyrrolizidine (AcAP). LolO is required for installation of the ether bridge upon the pathway intermediate, 1-exo-acetamidopyrrolizidine (AcAP). In sequential 2-oxoglutarate- and O(2)-consuming steps, lolO removes hydrogens from C2 and C7 of AcAP to form both carbon-oxygen bonds in N-acetylnorloline (NANL), the precursor to all other lolines. The enzymes lolD, lolE, lolF and lolT have also been proposed to be involved in the ether-bridge installation. Further processing of the exocyclic moiety of NANL by fungal N-acetamidase (LolN), methyltransferase (LolM), and cytochrome P450 (LolP) enzymes, with occasional involvement of a plant acetyltransferase, generates the other known lolines. LolN transforms NANL to norlonine which is monomethylated and dimethylated to respectively lonine and N-methyllonine (NML) by lolM. LolP catalyzes hydroxylation of the methyl group in N-methylloline (NML) and further oxygenation to N-formylloline (NFL). A plant acetyltransferase is responsible for the acetylation of loline to form N-acetylloline (NAL). LolA might interact with aspartate kinase to prevent feedback inhibition of its activity by these end products and thereby promote production of l-homoserine from l-aspartate. This chain is 2-oxoglutarate-dependent dioxygenase lolO1, found in Epichloe uncinata (Endophyte fungus).